The sequence spans 269 residues: 4-hydroxy-tetrahydrodipicolinate reductase (269 aa).

Residues 11 to 16 (GGSGRM) and glutamate 37 each bind NAD(+). NADP(+) is bound at residue arginine 38. NAD(+) contacts are provided by residues 101–103 (GTT) and 125–128 (AGNM). The active-site Proton donor/acceptor is histidine 158. Histidine 159 serves as a coordination point for (S)-2,3,4,5-tetrahydrodipicolinate. The active-site Proton donor is lysine 162. 168 to 169 (GT) serves as a coordination point for (S)-2,3,4,5-tetrahydrodipicolinate.

This sequence belongs to the DapB family.

It is found in the cytoplasm. The enzyme catalyses (S)-2,3,4,5-tetrahydrodipicolinate + NAD(+) + H2O = (2S,4S)-4-hydroxy-2,3,4,5-tetrahydrodipicolinate + NADH + H(+). It catalyses the reaction (S)-2,3,4,5-tetrahydrodipicolinate + NADP(+) + H2O = (2S,4S)-4-hydroxy-2,3,4,5-tetrahydrodipicolinate + NADPH + H(+). Its pathway is amino-acid biosynthesis; L-lysine biosynthesis via DAP pathway; (S)-tetrahydrodipicolinate from L-aspartate: step 4/4. Functionally, catalyzes the conversion of 4-hydroxy-tetrahydrodipicolinate (HTPA) to tetrahydrodipicolinate. This chain is 4-hydroxy-tetrahydrodipicolinate reductase, found in Dinoroseobacter shibae (strain DSM 16493 / NCIMB 14021 / DFL 12).